The primary structure comprises 143 residues: Large ribosomal subunit protein uL11 (143 aa).

The protein belongs to the universal ribosomal protein uL11 family. As to quaternary structure, part of the ribosomal stalk of the 50S ribosomal subunit. Interacts with L10 and the large rRNA to form the base of the stalk. L10 forms an elongated spine to which L12 dimers bind in a sequential fashion forming a multimeric L10(L12)X complex. In terms of processing, one or more lysine residues are methylated.

Functionally, forms part of the ribosomal stalk which helps the ribosome interact with GTP-bound translation factors. The polypeptide is Large ribosomal subunit protein uL11 (Acidovorax ebreus (strain TPSY) (Diaphorobacter sp. (strain TPSY))).